Reading from the N-terminus, the 395-residue chain is PCI domain-containing protein 2 homolog (395 aa).

Residues 208–389 (ITYKYFVGRR…NKLVVSKQNP (182 aa)) enclose the PCI domain.

It belongs to the CSN12 family. As to quaternary structure, component of the nuclear pore complex (NPC)-associated TREX-2/AMEX complex (anchoring and mRNA export complex), composed of e(y)2, xmas and PCID2. Interaction between the TREX-2/AMEX complex and the ORC complex is required for ORC localization to mRNPs, and consequently mRNA export. Within the TREX-2/AMEX-ORC complex, interacts with Orc3 and Orc4. Interacts with sbr/NXF1. Interacts with Moe. Interacts with nudC; required to maintain stability in the cytoplasm. In terms of processing, mono- and poly-ubiquitinated.

It localises to the nucleus. Its subcellular location is the cytoplasm. The protein localises to the nucleus membrane. The protein resides in the cytoskeleton. Required for the export of nuclear mRNAs and involved in mRNA trafficking in the cytoplasm. Component of the nuclear pore complex (NPC)-associated TREX-2/AMEX complex (anchoring and mRNA export complex) which functions in docking export-competent ribonucleoprotein particles (mRNPs) to the nuclear entrance of the nuclear pore complex (nuclear basket), thereby enabling the export of mRNAs to the cytoplasm through the nuclear pores. Within the complex, specifically promotes the association of factors involved in regulating nuclear mRNA export, such as Moe, sbr/NXF1 and the ORC complex, to the mRNPs particles. In the cytoplasm, functions independently of its role in the TREX-2/AMEX complex, to promote cytoplasmic mRNA trafficking together with nudC. Associates with translationally active polysomes. This Drosophila melanogaster (Fruit fly) protein is PCI domain-containing protein 2 homolog.